Reading from the N-terminus, the 119-residue chain is Large ribosomal subunit protein uL18 (119 aa).

A disordered region spans residues 54–76 (LTSASTLADDVEGETPTEESRSV).

The protein belongs to the universal ribosomal protein uL18 family. Part of the 50S ribosomal subunit; part of the 5S rRNA/L5/L18/L25 subcomplex. Contacts the 5S and 23S rRNAs.

In terms of biological role, this is one of the proteins that bind and probably mediate the attachment of the 5S RNA into the large ribosomal subunit, where it forms part of the central protuberance. The polypeptide is Large ribosomal subunit protein uL18 (Salinibacter ruber (strain DSM 13855 / M31)).